An 833-amino-acid chain; its full sequence is A disintegrin and metalloproteinase with thrombospondin motifs 4 (833 aa).

Positions 1–49 (MSQMGLHPRRGLTGHWLQRFQPCLPLHTVQWRRLLLLAFLLSLAWPASP) are cleaved as a signal peptide. The propeptide occupies 50 to 208 (LPREEEIVFP…PSPISRRTKR (159 aa)). A glycan (N-linked (GlcNAc...) asparagine) is linked at Asn63. Residues 180 to 204 (KSPASSQGPMCTVKAPSGSPSPISR) are disordered. A Cysteine switch motif is present at residues 188 to 195 (PMCTVKAP). Cys190 provides a ligand contact to Zn(2+). The Peptidase M12B domain maps to 214 to 424 (RFVETLVVAD…GYGHCLLDKP (211 aa)). 11 cysteine pairs are disulfide-bonded: Cys289–Cys341, Cys318–Cys323, Cys335–Cys419, Cys373–Cys403, Cys445–Cys468, Cys456–Cys478, Cys463–Cys497, Cys491–Cys502, Cys528–Cys565, Cys532–Cys570, and Cys543–Cys555. N-linked (GlcNAc...) asparagine glycosylation occurs at Asn299. His357 is a binding site for Zn(2+). Residue Glu358 is part of the active site. Zn(2+) contacts are provided by His361 and His367. The Disintegrin domain occupies 433-515 (TFPGKDYDAD…DQLKDFNVPQ (83 aa)). The 56-residue stretch at 516–571 (AGGWGPWGPWGDCSRTCGGGVQFSSRDCTRPVPRNGGKYCEGRRTRFRSCNTENCP) folds into the TSP type-1 domain. A spacer region spans residues 682-833 (SKQSGSFKKF…LRKRPWAGRK (152 aa)).

As to quaternary structure, interacts with SRPX2. Requires Zn(2+) as cofactor. The precursor is cleaved by a furin endopeptidase. In terms of processing, glycosylated. Can be O-fucosylated by POFUT2 on a serine or a threonine residue found within the consensus sequence C1-X(2)-(S/T)-C2-G of the TSP type-1 repeat domains where C1 and C2 are the first and second cysteine residue of the repeat, respectively. Fucosylated repeats can then be further glycosylated by the addition of a beta-1,3-glucose residue by the glucosyltransferase, B3GALTL. Fucosylation mediates the efficient secretion of ADAMTS family members. Can also be C-glycosylated with one or two mannose molecules on tryptophan residues within the consensus sequence W-X-X-W of the TPRs, and N-glycosylated. These other glycosylations can also facilitate secretion.

The protein localises to the secreted. The protein resides in the extracellular space. It is found in the extracellular matrix. It carries out the reaction Glutamyl endopeptidase. Bonds cleaved include 370-Thr-Glu-Gly-Glu-|-Ala-Arg-Gly-Ser-377 in the interglobular domain of mammalian aggrecan.. Its function is as follows. Cleaves aggrecan, a cartilage proteoglycan, at the '392-Glu-|-Ala-393' site and may be involved in its turnover. Also cleaves COMP. May play an important role in the destruction of aggrecan in arthritic diseases. In Mus musculus (Mouse), this protein is A disintegrin and metalloproteinase with thrombospondin motifs 4 (Adamts4).